Consider the following 471-residue polypeptide: Uronate isomerase (471 aa).

This sequence belongs to the metallo-dependent hydrolases superfamily. Uronate isomerase family.

It carries out the reaction D-glucuronate = D-fructuronate. The catalysed reaction is aldehydo-D-galacturonate = keto-D-tagaturonate. The protein operates within carbohydrate metabolism; pentose and glucuronate interconversion. The chain is Uronate isomerase from Xanthomonas campestris pv. campestris (strain B100).